Reading from the N-terminus, the 163-residue chain is Protein-export protein SecB (163 aa).

This sequence belongs to the SecB family. As to quaternary structure, homotetramer, a dimer of dimers. One homotetramer interacts with 1 SecA dimer.

It is found in the cytoplasm. Functionally, one of the proteins required for the normal export of preproteins out of the cell cytoplasm. It is a molecular chaperone that binds to a subset of precursor proteins, maintaining them in a translocation-competent state. It also specifically binds to its receptor SecA. This chain is Protein-export protein SecB, found in Brucella abortus (strain S19).